The sequence spans 342 residues: S-adenosylmethionine:tRNA ribosyltransferase-isomerase (342 aa).

This sequence belongs to the QueA family. In terms of assembly, monomer.

It localises to the cytoplasm. It catalyses the reaction 7-aminomethyl-7-carbaguanosine(34) in tRNA + S-adenosyl-L-methionine = epoxyqueuosine(34) in tRNA + adenine + L-methionine + 2 H(+). It functions in the pathway tRNA modification; tRNA-queuosine biosynthesis. In terms of biological role, transfers and isomerizes the ribose moiety from AdoMet to the 7-aminomethyl group of 7-deazaguanine (preQ1-tRNA) to give epoxyqueuosine (oQ-tRNA). The chain is S-adenosylmethionine:tRNA ribosyltransferase-isomerase from Streptococcus agalactiae serotype V (strain ATCC BAA-611 / 2603 V/R).